We begin with the raw amino-acid sequence, 232 residues long: MFDIGFGELMLLFVIGLVVLGPERLPVAVRTVTGWIRAIRSMASTVQNELTQELKLQELQDSLKKVEEASKNNLSPELKASMEELREAAESMKKYFKGINSAALDPTEPHTIHNPLVTDPEALHDGVTPAEGDRQAEAPLMAPSVKASAPADSVANPGEPIAAAAIGQPAAASVDAASTSPSAKVSAPADSAANLATQAATPAAPAPAPEEPGRAATATGPASSTSPLNNDR.

Residues 1 to 21 (MFDIGFGELMLLFVIGLVVLG) traverse the membrane as a helical segment. 2 disordered regions span residues 108–129 (EPHT…GVTP) and 176–232 (AAST…NNDR). 2 stretches are compositionally biased toward low complexity: residues 189-203 (ADSA…ATPA) and 214-232 (RAAT…NNDR).

Belongs to the TatB family. In terms of assembly, the Tat system comprises two distinct complexes: a TatABC complex, containing multiple copies of TatA, TatB and TatC subunits, and a separate TatA complex, containing only TatA subunits. Substrates initially bind to the TatABC complex, which probably triggers association of the separate TatA complex to form the active translocon.

The protein localises to the cell inner membrane. Part of the twin-arginine translocation (Tat) system that transports large folded proteins containing a characteristic twin-arginine motif in their signal peptide across membranes. Together with TatC, TatB is part of a receptor directly interacting with Tat signal peptides. TatB may form an oligomeric binding site that transiently accommodates folded Tat precursor proteins before their translocation. In Sodalis glossinidius (strain morsitans), this protein is Sec-independent protein translocase protein TatB.